A 53-amino-acid chain; its full sequence is Small, acid-soluble spore protein K (53 aa).

Residues 1-53 (MGRQAEFWSESKNNSKIDGQPKAKARFASKRPNGTINTHPQERMRAANQQEEE) form a disordered region.

It belongs to the SspK family.

The protein localises to the spore core. This is Small, acid-soluble spore protein K from Bacillus cytotoxicus (strain DSM 22905 / CIP 110041 / 391-98 / NVH 391-98).